The chain runs to 128 residues: Iron-sulfur cluster insertion protein ErpA (128 aa).

3 residues coordinate iron-sulfur cluster: Cys-56, Cys-120, and Cys-122.

The protein belongs to the HesB/IscA family. As to quaternary structure, homodimer. The cofactor is iron-sulfur cluster.

Required for insertion of 4Fe-4S clusters for at least IspG. The chain is Iron-sulfur cluster insertion protein ErpA from Xanthomonas oryzae pv. oryzae (strain MAFF 311018).